The chain runs to 72 residues: Translation initiation factor IF-1 (72 aa).

The 72-residue stretch at 1-72 (MAKEDMIEVE…TRGRITYRFK (72 aa)) folds into the S1-like domain.

The protein belongs to the IF-1 family. In terms of assembly, component of the 30S ribosomal translation pre-initiation complex which assembles on the 30S ribosome in the order IF-2 and IF-3, IF-1 and N-formylmethionyl-tRNA(fMet); mRNA recruitment can occur at any time during PIC assembly.

It is found in the cytoplasm. Its function is as follows. One of the essential components for the initiation of protein synthesis. Stabilizes the binding of IF-2 and IF-3 on the 30S subunit to which N-formylmethionyl-tRNA(fMet) subsequently binds. Helps modulate mRNA selection, yielding the 30S pre-initiation complex (PIC). Upon addition of the 50S ribosomal subunit IF-1, IF-2 and IF-3 are released leaving the mature 70S translation initiation complex. In Enterococcus faecalis (strain ATCC 700802 / V583), this protein is Translation initiation factor IF-1.